Consider the following 428-residue polypeptide: Histidine--tRNA ligase (428 aa).

The protein belongs to the class-II aminoacyl-tRNA synthetase family. As to quaternary structure, homodimer.

The protein resides in the cytoplasm. The catalysed reaction is tRNA(His) + L-histidine + ATP = L-histidyl-tRNA(His) + AMP + diphosphate + H(+). The polypeptide is Histidine--tRNA ligase (Bordetella bronchiseptica (strain ATCC BAA-588 / NCTC 13252 / RB50) (Alcaligenes bronchisepticus)).